A 955-amino-acid polypeptide reads, in one-letter code: Glycine dehydrogenase (decarboxylating) (955 aa).

Lysine 702 bears the N6-(pyridoxal phosphate)lysine mark.

Belongs to the GcvP family. In terms of assembly, the glycine cleavage system is composed of four proteins: P, T, L and H. The cofactor is pyridoxal 5'-phosphate.

The catalysed reaction is N(6)-[(R)-lipoyl]-L-lysyl-[glycine-cleavage complex H protein] + glycine + H(+) = N(6)-[(R)-S(8)-aminomethyldihydrolipoyl]-L-lysyl-[glycine-cleavage complex H protein] + CO2. Functionally, the glycine cleavage system catalyzes the degradation of glycine. The P protein binds the alpha-amino group of glycine through its pyridoxal phosphate cofactor; CO(2) is released and the remaining methylamine moiety is then transferred to the lipoamide cofactor of the H protein. This is Glycine dehydrogenase (decarboxylating) from Bradyrhizobium diazoefficiens (strain JCM 10833 / BCRC 13528 / IAM 13628 / NBRC 14792 / USDA 110).